The primary structure comprises 122 residues: Large ribosomal subunit protein bL17 (122 aa).

The protein belongs to the bacterial ribosomal protein bL17 family. Part of the 50S ribosomal subunit. Contacts protein L32.

This Neisseria meningitidis serogroup C / serotype 2a (strain ATCC 700532 / DSM 15464 / FAM18) protein is Large ribosomal subunit protein bL17.